Here is a 248-residue protein sequence, read N- to C-terminus: Thioredoxin-like protein AAED1, chloroplastic (248 aa).

Residues 1 to 52 (MAIALSSSSTITSITLQPKLKTIHGLGTVLPGYSVKSHFRSVSLRRSAVVVS) constitute a chloroplast transit peptide. A53 bears the N-acetylalanine mark.

Belongs to the peroxiredoxin-like PRXL2 family. PRXL2C subfamily.

The protein localises to the plastid. The protein resides in the chloroplast. The sequence is that of Thioredoxin-like protein AAED1, chloroplastic from Arabidopsis thaliana (Mouse-ear cress).